The chain runs to 318 residues: NADH-ubiquinone oxidoreductase chain 1 (318 aa).

9 helical membrane-spanning segments follow: residues 2 to 22 (FLMN…FLTL), 37 to 57 (PNIV…KLFI), 69 to 89 (LMFT…WIPM), 100 to 120 (LGVL…LWSG), 136 to 156 (VAQT…TMMM), 171 to 191 (HMWL…STLA), 206 to 226 (ELVS…FFMA), 253 to 273 (ELFT…FLWI), and 294 to 314 (LPLT…SAGI).

It belongs to the complex I subunit 1 family.

It localises to the mitochondrion inner membrane. The catalysed reaction is a ubiquinone + NADH + 5 H(+)(in) = a ubiquinol + NAD(+) + 4 H(+)(out). Its function is as follows. Core subunit of the mitochondrial membrane respiratory chain NADH dehydrogenase (Complex I) that is believed to belong to the minimal assembly required for catalysis. Complex I functions in the transfer of electrons from NADH to the respiratory chain. The immediate electron acceptor for the enzyme is believed to be ubiquinone. This is NADH-ubiquinone oxidoreductase chain 1 (MT-ND1) from Tolypeutes matacus (Southern three-banded armadillo).